The primary structure comprises 267 residues: Tryptophan synthase alpha chain (267 aa).

Catalysis depends on proton acceptor residues glutamate 49 and aspartate 60.

Belongs to the TrpA family. As to quaternary structure, tetramer of two alpha and two beta chains.

It carries out the reaction (1S,2R)-1-C-(indol-3-yl)glycerol 3-phosphate + L-serine = D-glyceraldehyde 3-phosphate + L-tryptophan + H2O. The protein operates within amino-acid biosynthesis; L-tryptophan biosynthesis; L-tryptophan from chorismate: step 5/5. In terms of biological role, the alpha subunit is responsible for the aldol cleavage of indoleglycerol phosphate to indole and glyceraldehyde 3-phosphate. This Rippkaea orientalis (strain PCC 8801 / RF-1) (Cyanothece sp. (strain PCC 8801)) protein is Tryptophan synthase alpha chain.